The chain runs to 513 residues: MDAFKGAMSKTLEVFTFCNIILALASLVVAQCVYQIIYYRFFHPLRHYPGPFWASVTRLWGAYHFIKGDKLDLEWQAIKQYGPIIRTSPTMLLVADSTLMPAIYHRRDTKARFYLSEMFETSGSLVIRDPAKHAAHRRLISATYSMSNIKRMEPLLDKHILHFLEKLDSEYAQNAKPMDFSTWAAYLSYDTVTDLGFRNPLGFVDSASDVGGLIYQFRLGMLLFATSGYLYPLFRWLTTTWLKKWLIIRPEQALGFGVIMKRANEVLEERKRALTEGRIAKAVKGDASYDFLQAFMDTRTPEGEYLDNKTIRAEVFVILGAGADGFSSLSSAFIAEVLSRPAVYGRVMAEIKAAAIAGEFSQPVPLFTEITKNLPFFLACMQEIFRLHPTGATQLPREITPNDPELVLSGHKVPVGIEVTCNPWIINRDYNIYGDGAEVFNPDRWLGDPEKIKFYEKHSLTWGHGARFLMYFEVSICEETPETPKLESEIYGPVLGWKNVWLDLHKRRSWEQQ.

The helical transmembrane segment at 14–34 (VFTFCNIILALASLVVAQCVY) threads the bilayer. Residue N308 is glycosylated (N-linked (GlcNAc...) asparagine). C477 contributes to the heme binding site.

This sequence belongs to the cytochrome P450 family. Requires heme as cofactor.

Its subcellular location is the membrane. The catalysed reaction is quiannulatene + 3 reduced [NADPH--hemoprotein reductase] + 3 O2 = quiannulatate + 3 oxidized [NADPH--hemoprotein reductase] + 4 H2O + 4 H(+). It functions in the pathway secondary metabolite biosynthesis; terpenoid biosynthesis. Its function is as follows. Cytochrome P450 monooxygenase; part of the gene cluster that mediates the biosynthesis of the pentacyclic sesterterpene quiannulatic acid. The first step of the pathway is performed by the sesterterpene synthase (QS) that possesses both prenyl transferase and terpene cyclase activity, converting isopentenyl diphosphate and dimethylallyl diphosphate into geranylfarnesyl diphosphate (GFPP) and further converting GFPP into quiannulatene via an unprecedented cyclization mode which involves three rounds of hydride shifts and two successive C-C bond migrations to construct the 5-6-5-5-5 fused ring. The cytochrome P450 monooxygenase Qnn-P450 then oxidizes quiannulatene at C-19 in 3 successive reactions to afford quiannulatic acid. This is Quiannulatic acid synthase from Emericella variicolor (Aspergillus stellatus).